We begin with the raw amino-acid sequence, 393 residues long: NAD(P)H-quinone oxidoreductase subunit H, chloroplastic (393 aa).

It belongs to the complex I 49 kDa subunit family. NDH is composed of at least 16 different subunits, 5 of which are encoded in the nucleus.

It localises to the plastid. It is found in the chloroplast thylakoid membrane. It carries out the reaction a plastoquinone + NADH + (n+1) H(+)(in) = a plastoquinol + NAD(+) + n H(+)(out). The enzyme catalyses a plastoquinone + NADPH + (n+1) H(+)(in) = a plastoquinol + NADP(+) + n H(+)(out). In terms of biological role, NDH shuttles electrons from NAD(P)H:plastoquinone, via FMN and iron-sulfur (Fe-S) centers, to quinones in the photosynthetic chain and possibly in a chloroplast respiratory chain. The immediate electron acceptor for the enzyme in this species is believed to be plastoquinone. Couples the redox reaction to proton translocation, and thus conserves the redox energy in a proton gradient. The polypeptide is NAD(P)H-quinone oxidoreductase subunit H, chloroplastic (Nicotiana tomentosiformis (Tobacco)).